The following is a 109-amino-acid chain: C-X-C motif chemokine 13 (109 aa).

Positions 1 to 22 are cleaved as a signal peptide; the sequence is MKFISTSLLLMLLVSSLSPVQG. 2 cysteine pairs are disulfide-bonded: Cys33–Cys60 and Cys35–Cys76.

Belongs to the intercrine alpha (chemokine CxC) family. In terms of tissue distribution, highest levels in liver, followed by spleen, lymph node, appendix and stomach. Low levels in salivary gland, mammary gland and fetal spleen.

It localises to the secreted. Functionally, chemotactic for B-lymphocytes but not for T-lymphocytes, monocytes and neutrophils. Does not induce calcium release in B-lymphocytes. Binds to BLR1/CXCR5. This Homo sapiens (Human) protein is C-X-C motif chemokine 13 (CXCL13).